Reading from the N-terminus, the 113-residue chain is U11-theraphotoxin-Hhn1a (113 aa).

Positions 1–21 (MNTVRVTFLLVFVLAVSLGQA) are cleaved as a signal peptide. A propeptide spanning residues 22–74 (DKDENRMEMQEKTEQGNSYLDFAENLLLQKLEELEAKLLEEDSEESRNSRQKR) is cleaved from the precursor. A compositionally biased stretch (basic and acidic residues) spans 60 to 69 (LEEDSEESRN). Positions 60–83 (LEEDSEESRNSRQKRCIGEGVPCD) are disordered. 3 cysteine pairs are disulfide-bonded: Cys75/Cys90, Cys82/Cys95, and Cys89/Cys110.

The protein belongs to the neurotoxin 14 (magi-1) family. 01 (HNTX-16) subfamily. Expressed by the venom gland.

It localises to the secreted. Probable ion channel inhibitor. This is U11-theraphotoxin-Hhn1a from Cyriopagopus hainanus (Chinese bird spider).